The chain runs to 201 residues: Holliday junction branch migration complex subunit RuvA (201 aa).

The interval 1–64 is domain I; it reads MYEYIRGQFQ…EDFIGLYGFT (64 aa). The domain II stretch occupies residues 65–143; the sequence is TKEELEMFKL…PDELTSEEEQ (79 aa). Positions 144-152 are flexible linker; sequence LIEGINDNS. Residues 153–201 form a domain III region; sequence DYSFNINETLSALMALGYTEKEAQKALEKVDKTLSIENMIKESLKLLMR.

The protein belongs to the RuvA family. As to quaternary structure, homotetramer. Forms an RuvA(8)-RuvB(12)-Holliday junction (HJ) complex. HJ DNA is sandwiched between 2 RuvA tetramers; dsDNA enters through RuvA and exits via RuvB. An RuvB hexamer assembles on each DNA strand where it exits the tetramer. Each RuvB hexamer is contacted by two RuvA subunits (via domain III) on 2 adjacent RuvB subunits; this complex drives branch migration. In the full resolvosome a probable DNA-RuvA(4)-RuvB(12)-RuvC(2) complex forms which resolves the HJ.

Its subcellular location is the cytoplasm. Functionally, the RuvA-RuvB-RuvC complex processes Holliday junction (HJ) DNA during genetic recombination and DNA repair, while the RuvA-RuvB complex plays an important role in the rescue of blocked DNA replication forks via replication fork reversal (RFR). RuvA specifically binds to HJ cruciform DNA, conferring on it an open structure. The RuvB hexamer acts as an ATP-dependent pump, pulling dsDNA into and through the RuvAB complex. HJ branch migration allows RuvC to scan DNA until it finds its consensus sequence, where it cleaves and resolves the cruciform DNA. This chain is Holliday junction branch migration complex subunit RuvA, found in Clostridium perfringens (strain SM101 / Type A).